Consider the following 287-residue polypeptide: uncharacterized protein (287 aa).

The protein belongs to the AllH family.

This is an uncharacterized protein from Escherichia coli (strain K12).